The following is a 160-amino-acid chain: Phosphoribosyl-ATP pyrophosphatase (160 aa).

Belongs to the PRA-PH family.

It is found in the cytoplasm. The catalysed reaction is 1-(5-phospho-beta-D-ribosyl)-ATP + H2O = 1-(5-phospho-beta-D-ribosyl)-5'-AMP + diphosphate + H(+). Its pathway is amino-acid biosynthesis; L-histidine biosynthesis; L-histidine from 5-phospho-alpha-D-ribose 1-diphosphate: step 2/9. This is Phosphoribosyl-ATP pyrophosphatase from Granulibacter bethesdensis (strain ATCC BAA-1260 / CGDNIH1).